A 148-amino-acid chain; its full sequence is Probable DNA-directed RNA polymerases I, II, and III subunit RPABC3 (148 aa).

Residues 16–40 (DPDGKKFDRVSRYFCDAESFKMELI) are non-specific ssDNA binding.

This sequence belongs to the eukaryotic RPB8 RNA polymerase subunit family. In terms of assembly, component of the RNA polymerase I (Pol I), RNA polymerase II (Pol II) and RNA polymerase III (Pol III) complexes consisting of at least 13, 12 and 17 subunits, respectively. Directly interacts with POLR2A.

It localises to the nucleus. DNA-dependent RNA polymerase catalyzes the transcription of DNA into RNA using the four ribonucleoside triphosphates as substrates. Common component of RNA polymerases I, II and III which synthesize ribosomal RNA precursors, mRNA precursors and many functional non-coding RNAs, and small RNAs, such as 5S rRNA and tRNAs, respectively. This Caenorhabditis elegans protein is Probable DNA-directed RNA polymerases I, II, and III subunit RPABC3 (rpb-8).